The primary structure comprises 84 residues: Large ribosomal subunit protein bL27 (84 aa).

This sequence belongs to the bacterial ribosomal protein bL27 family.

The polypeptide is Large ribosomal subunit protein bL27 (Kocuria rhizophila (strain ATCC 9341 / DSM 348 / NBRC 103217 / DC2201)).